A 1068-amino-acid polypeptide reads, in one-letter code: Putative protein TIC 214 N-terminal part (1068 aa).

Transmembrane regions (helical) follow at residues 11 to 31 (VLWV…LFGI), 68 to 88 (ITGQ…VLLI), 92 to 112 (LLTL…KDLI), 131 to 151 (IFFD…SPVL), 166 to 186 (FIFL…FVSL), and 213 to 233 (FSII…VPFI).

This sequence belongs to the TIC214 family. As to quaternary structure, part of the Tic complex.

Its subcellular location is the plastid. The protein localises to the chloroplast inner membrane. In terms of biological role, involved in protein precursor import into chloroplasts. May be part of an intermediate translocation complex acting as a protein-conducting channel at the inner envelope. In Marchantia polymorpha (Common liverwort), this protein is Putative protein TIC 214 N-terminal part.